Consider the following 364-residue polypeptide: PHD finger protein 6 (364 aa).

Ser2 bears the N-acetylserine mark. Short sequence motifs (nuclear localization signal) lie at residues 13-16 (RQRK) and 129-133 (RKHKK). Residues 14–52 (QRKCGFCKSNRDKECGQLLISENQKVAAHHKCMLFSSAL) form a C2HC pre-PHD-type 1 zinc finger. The tract at residues 14–132 (QRKCGFCKSN…IYMVYCRKHK (119 aa)) is extended PHD1 domain (ePHD1). Residues 80 to 132 (LMCSLCHCPGATIGCDVKTCHRTYHYHCALHDKAQIREKPSQGIYMVYCRKHK) form a PHD-type 1 zinc finger. Residues Ser138, Ser145, and Ser155 each carry the phosphoserine modification. The interval 139–211 (EADLEESFNE…RSSPNDTRPK (73 aa)) is disordered. The short motif at 157–169 (KTKKKSRKGRPRK) is the Nucleolar localization signal element. The segment covering 157–171 (KTKKKSRKGRPRKTN) has biased composition (basic residues). A Glycyl lysine isopeptide (Lys-Gly) (interchain with G-Cter in SUMO2) cross-link involves residue Lys173. Phosphoserine occurs at positions 183 and 199. The segment at 209–249 (RPKCGFCHVGEEENEARGKLHIFNAKKAAAHYKCMLFSSGT) adopts a C2HC pre-PHD-type 2 zinc-finger fold. The interval 209–330 (RPKCGFCHVG…IYKLYCKNHS (122 aa)) is extended PHD2 domain (ePHD2). Lys227 participates in a covalent cross-link: Glycyl lysine isopeptide (Lys-Gly) (interchain with G-Cter in SUMO2). Residues 278–330 (MKCTLCSQPGATIGCEIKACVKTYHYHCGVQDKAKYIENMSRGIYKLYCKNHS) form a PHD-type 2 zinc finger. The tract at residues 330 to 364 (SGNDERDEEDEERESKSRGRVAIDQQLTQQQLNGN) is disordered. Polar residues predominate over residues 354–364 (QQLTQQQLNGN). Thr357 is subject to Phosphothreonine.

Interacts with UBTF. Interacts with the NuRD complex component RBBP4 (via the nucleolar localization motif), the interaction mediates transcriptional repression activity. In terms of tissue distribution, at 12.5 dpc it is highly expressed in the embryonic central nervous system and at lower levels in other tissues. Very low levels present throughout the adult brain.

It is found in the nucleus. The protein resides in the nucleolus. Its subcellular location is the chromosome. The protein localises to the centromere. It localises to the kinetochore. Functionally, transcriptional regulator that associates with ribosomal RNA promoters and suppresses ribosomal RNA (rRNA) transcription. This Mus musculus (Mouse) protein is PHD finger protein 6 (Phf6).